Consider the following 675-residue polypeptide: Sodium/myo-inositol cotransporter 2 (675 aa).

Residues 1 to 27 lie on the Extracellular side of the membrane; sequence MESGTSSPQPPQLDPLDAFPQKGLEPG. The helical transmembrane segment at 28 to 48 threads the bilayer; that stretch reads DIAVLVLYFLFVLAVGLWSTV. Residues 49–65 are Cytoplasmic-facing; sequence KTKRDTVKGYFLAGGDM. Residues 66-88 traverse the membrane as a helical segment; the sequence is VWWPVGASLFASNVGSGHFIGLA. Residues 89-102 are Extracellular-facing; that stretch reads GSGAATGISVSAYE. The helical transmembrane segment at 103-123 threads the bilayer; sequence LNGLFSVLMLAWIFLPIYIAG. The Cytoplasmic portion of the chain corresponds to 124–135; the sequence is QVTTMPEYLRKR. The chain crosses the membrane as a helical span at residues 136 to 156; sequence FGGIRIPIILAVLYLFIYIFT. Over 157–180 the chain is Extracellular; it reads KISVDMYAGAIFIQQSLHLDLYLA. Residues 181 to 201 traverse the membrane as a helical segment; that stretch reads IVGLLAITAVYTVAGGLAAVI. Residues 202–208 are Cytoplasmic-facing; sequence YTDALQT. Residues 209 to 229 form a helical membrane-spanning segment; sequence LIMLIGALTLMGYSFAAVGGM. Topologically, residues 230 to 272 are extracellular; it reads EGLKEKYFLALASNRSENSSCGLPREDAFHIFRDPLTSDLPWP. Residues 273–293 form a helical membrane-spanning segment; the sequence is GVLFGMSIPSLWYWCTDQVIV. Over 294–308 the chain is Cytoplasmic; it reads QRTLAAKNLSHAKGG. The helical transmembrane segment at 309–329 threads the bilayer; that stretch reads ALMAAYLKVLPLFIMVFPGMV. The Extracellular segment spans residues 330–375; the sequence is SRILFPDQVACADPEICQKICSNPSGCSDIAYPKLVLELLPTGLRG. The chain crosses the membrane as a helical span at residues 376-396; sequence LMMAVMVAALMSSLTSIFNSA. At 397–418 the chain is on the cytoplasmic side; it reads STIFTMDLWNHLRPRASEKELM. The chain crosses the membrane as a helical span at residues 419–439; sequence IVGRVFVLLLVLVSILWIPVV. Residues 440–446 are Extracellular-facing; that stretch reads QASQGGQ. A helical membrane pass occupies residues 447–467; that stretch reads LFIYIQSISSYLQPPVAVVFI. At 468 to 479 the chain is on the cytoplasmic side; it reads MGCFWKRTNEKG. A helical transmembrane segment spans residues 480-500; the sequence is AFWGLISGLLLGLVRLVLDFI. Residues 501–521 lie on the Extracellular side of the membrane; the sequence is YVQPRCDQPDERPVLVKSIHY. A helical membrane pass occupies residues 522-542; sequence LYFSMILSTVTLITVSTVSWF. Topologically, residues 543–654 are cytoplasmic; that stretch reads TEPPSKEMVS…SLEENPLVKT (112 aa). A helical membrane pass occupies residues 655-675; sequence LLDVNLIFCVSCAIFIWGYFA.

The protein belongs to the sodium:solute symporter (SSF) (TC 2.A.21) family. In terms of tissue distribution, highest expression in heart, skeletal muscle, kidney, liver and placenta. Weaker expression in brain, colon, spleen, lung and peripheral blood leukocytes.

The protein resides in the membrane. Its subcellular location is the apical cell membrane. The catalysed reaction is myo-inositol(out) + 2 Na(+)(out) = myo-inositol(in) + 2 Na(+)(in). It catalyses the reaction 1D-chiro-inositol(out) + 2 Na(+)(out) = 1D-chiro-inositol(in) + 2 Na(+)(in). The enzyme catalyses D-glucose(out) + 2 Na(+)(out) = D-glucose(in) + 2 Na(+)(in). It carries out the reaction D-xylose(out) + 2 Na(+)(out) = D-xylose(in) + 2 Na(+)(in). Its activity is regulated as follows. MI transport activity inhibited by D-chiro-inositol (DCI), phlorizin (Pz) and sodium (Na(+)). Insulin increases D-chiro-inositol uptake. Its function is as follows. Involved in the sodium-dependent cotransport of myo-inositol (MI) with a Na(+):MI stoichiometry of 2:1. Exclusively responsible for apical MI transport and absorption in intestine. Can also transport D-chiro-inositol (DCI) but not L-fucose. Exhibits stereospecific cotransport of both D-glucose and D-xylose. May induce apoptosis through the TNF-alpha, PDCD1 pathway. May play a role in the regulation of MI concentration in serum, involving reabsorption in at least the proximal tubule of the kidney. This Homo sapiens (Human) protein is Sodium/myo-inositol cotransporter 2.